We begin with the raw amino-acid sequence, 71 residues long: Exodeoxyribonuclease 7 small subunit (71 aa).

This sequence belongs to the XseB family. Heterooligomer composed of large and small subunits.

It localises to the cytoplasm. The catalysed reaction is Exonucleolytic cleavage in either 5'- to 3'- or 3'- to 5'-direction to yield nucleoside 5'-phosphates.. Bidirectionally degrades single-stranded DNA into large acid-insoluble oligonucleotides, which are then degraded further into small acid-soluble oligonucleotides. The chain is Exodeoxyribonuclease 7 small subunit from Clostridium botulinum (strain 657 / Type Ba4).